The chain runs to 239 residues: Ribonuclease 3 (239 aa).

In terms of domain architecture, RNase III spans 12-137 (RAKLESLIGH…LIAAIYLDGG (126 aa)). Mg(2+) is bound at residue E50. D54 is an active-site residue. The Mg(2+) site is built by D123 and E126. E126 is a catalytic residue. The DRBM domain occupies 162 to 231 (DAKTELQEWS…ATKMLEREGI (70 aa)).

The protein belongs to the ribonuclease III family. Homodimer. The cofactor is Mg(2+).

It localises to the cytoplasm. The enzyme catalyses Endonucleolytic cleavage to 5'-phosphomonoester.. Functionally, digests double-stranded RNA. Involved in the processing of primary rRNA transcript to yield the immediate precursors to the large and small rRNAs (23S and 16S). Processes some mRNAs, and tRNAs when they are encoded in the rRNA operon. Processes pre-crRNA and tracrRNA of type II CRISPR loci if present in the organism. In Rhizobium etli (strain CIAT 652), this protein is Ribonuclease 3.